The primary structure comprises 1825 residues: MKSNTNIRVLLVSGLILIFIFLGIKFEFINKNNNDKIGINRKLEFSYFTKNNNNNNNNNFKQDQLKNKKDKRILLKNEIIDTNIKKNIKKNNQKNNNEEIFPNFISRLLKSNDDMEIQQFTYRKSHYIVQFKDHINDETREQFKQFLINTDIVLDEQPYQSHIVNYIPHDSFLVLMNDEQSNLLSSKEWVSWIGEFEPSNKIHLNYNEKSIGLPVYIKLSDSTNSLIQRWENTLNSILTSYNSKVKLTLINQKKLKSIVYCNDESSSQSSCSLVSSEKLVYQWISEQSESNYIERSEKFQTANRLSPKAIFGTKDTLVNNDRIDIPLRGKGQILSIADTGLDGSHCFFSDSNNPIPYNSVNLNHRKVVTYIGSLHDNEDYVDGHGTHVCGSAAGAPEDSSLAISSFSGLATDAKIAFFDLASDPSNNEPVPPEDYSQLYQPLYNAGARVHGDSWGSLSIQGYLGSYSDDAGSIDDFLYTHPDFIILRAAGNNEQYSSLLSQATAKNVITVGAEQTTHESYTTDALEYSNFETVAKSTLNSLCQSFDDKYCTYTTAQCCTEYSTVKGLSGCCTSYIKNSYASIFSSQPELYNENNICSFSSKGPTHDGRLKPDIVAPGQYITSARSNGANTTDQCGDGSLPNTNALLSESGTSMATPLATAATTILRQYLVDGYYPTGSIVESNKLQPTGSLLKALMINNAQLLNGTFPLSSTNTNPSNAVFDTFAGANFVQGWGSLRMSEWLYVESSGVKPKPSRWVGIGELGKDKKASNWKEYSLSTGQNVSYCFTYKPSSSGSNSGGIPRIVATLVWTDPPSYSGAKLNLVNNLDLTMTNTESEFIFYSNSGGSSYNGTKGTTLPLQDSINNVEGIIYTPINTKSEISFRFIIAGTNIPIGPQNFSFVFHGENGEFDWADSCMQCNPDDTQPCFIENGVGSQTCGDDYLWGRCLVQSCNNNYNYNSISDKCSKFLSYNYIVIIVAGGTMSLIITVLILIKYMEYKENGNKFSLKEFFSGVLGTGKNVSGGGKGGSGGSGSGSGTLKDGTIDDGTGIHVRPKPKDAPVTPPDLYSLLSPFIIEITISTACSLVATAASILQPYYIGQIIQDIPTTKGIGDLRDQFIIIFLLALLEFVFSTISSWISGIVNEKMVMRLQNKVFRALIAQDMGFFQKNSAAVLMNVLIVDTPMLRSSLTGILLSVSVGICKFVGSLVFIFTISWKLSLAFFATVPVLAIVTQVQSKFTKRLTRRLLFHNSKASQHGQESMVNMHVVSNYCKQDREIAKYSEQLMMVFQISRRLIINNTFAASIKWLMVESLAFIILYFGAYLAIQKQFTVGLLVSFSLYIGYVIDSSTTLFGVYSSYVQCLASATRVFLILRSAPRKRTTLEEEELDNIIDTNQDNNNNNNNDDISDSSSDDDDDNNNNKNSKNNKTKSGESDDSSSEDAEYKKNKNKRNNGKMTTKLSNSPPLVGEGIDNNNNNNNDNNINDDNNQQDPNNNNNEIDDDGDDDGDDDDEGEDENNNNNNNDDPNDNNGIEMLTEKQLRKRKRQMKKEFYKKTGISCLELNLIPSAYTELTECRGEIEFKNVSFCYPSRADVGVLYNIDLKFESGKCYGLVGPSGSGKSTLLELISRFYSLHPSGGKIYMDGIDIAKIRPSNLRSFVTNVHQHPFLFDATISENIGYALDNPTQEDIIEAAKLANAHEFIQSLPKQYDTMLTDGGNLSGGQKKRIAVARAICAKRKIMLLDEITAELDPESEEAINKSIKVLTRGHTVVMVAHKVAAVRDCDKIFVLDKGQIVEQGTHNQLMAKKGKYYRMFAFSEDDDYAPLLVL.

The N-terminal stretch at 1–26 (MKSNTNIRVLLVSGLILIFIFLGIKF) is a signal peptide. A Peptidase S8 domain is found at 307–727 (PKAIFGTKDT…NAVFDTFAGA (421 aa)). Residues Asp338 and His384 each act as charge relay system in the active site. Residue Asn629 is glycosylated (N-linked (GlcNAc...) asparagine). The Charge relay system role is filled by Ser652. N-linked (GlcNAc...) asparagine glycans are attached at residues Asn704, Asn781, Asn849, and Asn896. Residues 971–991 (YIVIIVAGGTMSLIITVLILI) form a helical membrane-spanning segment. A glycan (N-linked (GlcNAc...) asparagine) is linked at Asn1018. The next 4 helical transmembrane spans lie at 1071–1091 (FIIE…ASIL), 1116–1136 (FIII…SSWI), 1189–1209 (GILL…VFIF), and 1210–1230 (TISW…AIVT). One can recognise an ABC transmembrane type-1 domain in the interval 1075-1358 (ITISTACSLV…LFGVYSSYVQ (284 aa)). A glycan (N-linked (GlcNAc...) asparagine) is linked at Asn1295. A run of 2 helical transmembrane segments spans residues 1304–1324 (WLMV…LAIQ) and 1327–1347 (FTVG…DSST). The disordered stretch occupies residues 1386-1529 (DNIIDTNQDN…NDDPNDNNGI (144 aa)). Positions 1388–1402 (IIDTNQDNNNNNNND) are enriched in low complexity. Over residues 1403–1415 (DISDSSSDDDDDN) the composition is skewed to acidic residues. An N-linked (GlcNAc...) asparagine glycan is attached at Asn1424. The span at 1465–1494 (GEGIDNNNNNNNDNNINDDNNQQDPNNNNN) shows a compositional bias: low complexity. The span at 1495–1514 (EIDDDGDDDGDDDDEGEDEN) shows a compositional bias: acidic residues. Positions 1515 to 1529 (NNNNNNDDPNDNNGI) are enriched in low complexity. An ABC transporter domain is found at 1576-1813 (IEFKNVSFCY…KGKYYRMFAF (238 aa)). Asn1580 carries N-linked (GlcNAc...) asparagine glycosylation. ATP is bound at residue 1611-1618 (GPSGSGKS). Asn1715 and Asn1755 each carry an N-linked (GlcNAc...) asparagine glycan.

The protein in the C-terminal section; belongs to the ABC transporter superfamily. ABCB family. Multidrug resistance exporter (TC 3.A.1.201) subfamily. This sequence in the N-terminal section; belongs to the peptidase S8 family.

It localises to the membrane. This Dictyostelium discoideum (Social amoeba) protein is Serine protease/ABC transporter B family protein tagD (tagD).